Reading from the N-terminus, the 94-residue chain is Pyrimidine/purine nucleoside phosphorylase (94 aa).

Belongs to the nucleoside phosphorylase PpnP family.

It catalyses the reaction a purine D-ribonucleoside + phosphate = a purine nucleobase + alpha-D-ribose 1-phosphate. It carries out the reaction adenosine + phosphate = alpha-D-ribose 1-phosphate + adenine. The enzyme catalyses cytidine + phosphate = cytosine + alpha-D-ribose 1-phosphate. The catalysed reaction is guanosine + phosphate = alpha-D-ribose 1-phosphate + guanine. It catalyses the reaction inosine + phosphate = alpha-D-ribose 1-phosphate + hypoxanthine. It carries out the reaction thymidine + phosphate = 2-deoxy-alpha-D-ribose 1-phosphate + thymine. The enzyme catalyses uridine + phosphate = alpha-D-ribose 1-phosphate + uracil. The catalysed reaction is xanthosine + phosphate = alpha-D-ribose 1-phosphate + xanthine. Catalyzes the phosphorolysis of diverse nucleosides, yielding D-ribose 1-phosphate and the respective free bases. Can use uridine, adenosine, guanosine, cytidine, thymidine, inosine and xanthosine as substrates. Also catalyzes the reverse reactions. This chain is Pyrimidine/purine nucleoside phosphorylase, found in Psychromonas ingrahamii (strain DSM 17664 / CCUG 51855 / 37).